The chain runs to 209 residues: Putative tripartite motif-containing protein 61 (209 aa).

The RING-type zinc finger occupies 16–57 (CPICLDYLKDPVTISCGHNFCLSCIIMSWKDLHDSFPCPFCH). The B box-type zinc finger occupies 92–133 (EEKHVCKKHNQVLTFFCQKDLELLCPRCSLSTDHQHHCVWPI). Zn(2+)-binding residues include C97, H100, C119, and H125.

The sequence is that of Putative tripartite motif-containing protein 61 (TRIM61) from Homo sapiens (Human).